A 271-amino-acid polypeptide reads, in one-letter code: MNPNKERLIEIFRSNVKGRIPDISGRNIRHDGRWGHWLEERFGISANADNHADILGYELKNEATSGKTTFGDWSANEYIFKTPPYNSLFSGSTASEKQNAFCRMFGKPNEAKNGRFSWSGSPIPKIWQYNSFGQIMVIEENLDIVIYYSFSQDLRYNKFEIIPPQLQHDEIQIARWYGVANPLLSRRGKTLKDKLEDKFNDLGWFTCTTDSIGAYDKICFGRPITFENWINLVDSGIVYFDSGMYEGNKRPYSQWRADNSYWNSLITDCHQ.

The enzyme catalyses Endonucleolytic cleavage of DNA to give specific double-stranded fragments with terminal 5'-phosphates.. Functionally, a P subtype restriction enzyme that recognizes the double-stranded sequence 5'-CCNGG-3' and cleaves after C-2. This is Type II restriction enzyme ScrFI from Lactococcus lactis subsp. cremoris (Streptococcus cremoris).